The chain runs to 420 residues: Lactosylceramide alpha-2,3-sialyltransferase (420 aa).

The interval 1-39 (MRKKAAGGAERRPLKPRTEAAAAAPAGRAMPSDHSRMKL) is disordered. Topologically, residues 1-67 (MRKKAAGGAE…MRRPNLLLKD (67 aa)) are cytoplasmic. The span at 9 to 18 (AERRPLKPRT) shows a compositional bias: basic and acidic residues. Positions 20–29 (AAAAAPAGRA) are enriched in low complexity. A helical transmembrane segment spans residues 68 to 88 (ILKCTLLLFGVWILFYILKLN). At 89–420 (HTTEECDMKR…DLSGGIHSEF (332 aa)) the chain is on the lumenal side. Cysteines 197 and 355 form a disulfide. Asn-238 carries an N-linked (GlcNAc...) asparagine glycan.

The protein belongs to the glycosyltransferase 29 family.

Its subcellular location is the golgi apparatus membrane. The enzyme catalyses a beta-D-Gal-(1-&gt;4)-beta-D-Glc-(1&lt;-&gt;1)-Cer(d18:1(4E)) + CMP-N-acetyl-beta-neuraminate = a ganglioside GM3 (d18:1(4E)) + CMP + H(+). The catalysed reaction is ganglioside GA2 (d18:1(4E)/18:0) + CMP-N-acetyl-beta-neuraminate = ganglioside GM2 (d18:1(4E)/18:0) + CMP + H(+). It catalyses the reaction a beta-D-Gal-(1&lt;-&gt;1')-ceramide + CMP-N-acetyl-beta-neuraminate = N-acetyl-alpha-neuraminosyl-(2-&gt;3)-beta-D-galactosyl-(1&lt;-&gt;1')-ceramide + CMP + H(+). It carries out the reaction ganglioside GA1 (d18:1(4E)/18:0) + CMP-N-acetyl-beta-neuraminate = ganglioside GM1 (d18:1(4E)/18:0) + CMP + H(+). In terms of biological role, transfers the sialyl group (N-acetyl-alpha-neuraminyl or NeuAc) from CMP-NeuAc to the non-reducing terminal galactose (Gal) of glycosphingolipids forming gangliosides (important molecules involved in the regulation of multiple cellular processes, including cell proliferation and differentiation, apoptosis, embryogenesis, development, and oncogenesis). Mainly involved in the biosynthesis of ganglioside GM3 but can also use different glycolipids as substrate acceptors such as D-galactosylceramide (GalCer), asialo-GM2 (GA2) and asialo-GM1 (GA1), although less preferentially than beta-D-Gal-(1-&gt;4)-beta-D-Glc-(1&lt;-&gt;1)-Cer (LacCer). The polypeptide is Lactosylceramide alpha-2,3-sialyltransferase (ST3GAL5) (Bos taurus (Bovine)).